A 149-amino-acid chain; its full sequence is D-aminoacyl-tRNA deacylase (149 aa).

A Gly-cisPro motif, important for rejection of L-amino acids motif is present at residues 139-140 (GP).

It belongs to the DTD family. In terms of assembly, homodimer.

The protein localises to the cytoplasm. It carries out the reaction glycyl-tRNA(Ala) + H2O = tRNA(Ala) + glycine + H(+). It catalyses the reaction a D-aminoacyl-tRNA + H2O = a tRNA + a D-alpha-amino acid + H(+). In terms of biological role, an aminoacyl-tRNA editing enzyme that deacylates mischarged D-aminoacyl-tRNAs. Also deacylates mischarged glycyl-tRNA(Ala), protecting cells against glycine mischarging by AlaRS. Acts via tRNA-based rather than protein-based catalysis; rejects L-amino acids rather than detecting D-amino acids in the active site. By recycling D-aminoacyl-tRNA to D-amino acids and free tRNA molecules, this enzyme counteracts the toxicity associated with the formation of D-aminoacyl-tRNA entities in vivo and helps enforce protein L-homochirality. This chain is D-aminoacyl-tRNA deacylase (DTD1), found in Candida glabrata (strain ATCC 2001 / BCRC 20586 / JCM 3761 / NBRC 0622 / NRRL Y-65 / CBS 138) (Yeast).